We begin with the raw amino-acid sequence, 138 residues long: Putative pre-16S rRNA nuclease (138 aa).

Belongs to the YqgF nuclease family.

It localises to the cytoplasm. Functionally, could be a nuclease involved in processing of the 5'-end of pre-16S rRNA. The polypeptide is Putative pre-16S rRNA nuclease (Listeria monocytogenes serotype 4b (strain CLIP80459)).